Reading from the N-terminus, the 244-residue chain is Small ribosomal subunit protein uS2m (244 aa).

This sequence belongs to the universal ribosomal protein uS2 family.

The protein resides in the mitochondrion. In Dictyostelium discoideum (Social amoeba), this protein is Small ribosomal subunit protein uS2m (mrps2).